The primary structure comprises 79 residues: Translational regulator CsrA (79 aa).

This sequence belongs to the CsrA/RsmA family. In terms of assembly, homodimer; the beta-strands of each monomer intercalate to form a hydrophobic core, while the alpha-helices form wings that extend away from the core.

The protein localises to the cytoplasm. A translational regulator that binds mRNA to regulate translation initiation and/or mRNA stability. Usually binds in the 5'-UTR at or near the Shine-Dalgarno sequence preventing ribosome-binding, thus repressing translation. Its main target seems to be the major flagellin gene, while its function is anatagonized by FliW. The chain is Translational regulator CsrA from Geotalea uraniireducens (strain Rf4) (Geobacter uraniireducens).